Reading from the N-terminus, the 156-residue chain is 6,7-dimethyl-8-ribityllumazine synthase (156 aa).

5-amino-6-(D-ribitylamino)uracil is bound by residues phenylalanine 23, 57–59, and 81–83; these read AFE and AVI. Residue 86–87 participates in (2S)-2-hydroxy-3-oxobutyl phosphate binding; that stretch reads AT. Residue histidine 89 is the Proton donor of the active site. A 5-amino-6-(D-ribitylamino)uracil-binding site is contributed by phenylalanine 114. Arginine 128 is a (2S)-2-hydroxy-3-oxobutyl phosphate binding site.

The protein belongs to the DMRL synthase family.

It carries out the reaction (2S)-2-hydroxy-3-oxobutyl phosphate + 5-amino-6-(D-ribitylamino)uracil = 6,7-dimethyl-8-(1-D-ribityl)lumazine + phosphate + 2 H2O + H(+). Its pathway is cofactor biosynthesis; riboflavin biosynthesis; riboflavin from 2-hydroxy-3-oxobutyl phosphate and 5-amino-6-(D-ribitylamino)uracil: step 1/2. Functionally, catalyzes the formation of 6,7-dimethyl-8-ribityllumazine by condensation of 5-amino-6-(D-ribitylamino)uracil with 3,4-dihydroxy-2-butanone 4-phosphate. This is the penultimate step in the biosynthesis of riboflavin. The protein is 6,7-dimethyl-8-ribityllumazine synthase of Sulfurovum sp. (strain NBC37-1).